A 260-amino-acid chain; its full sequence is Indole-3-glycerol phosphate synthase (260 aa).

Belongs to the TrpC family.

It carries out the reaction 1-(2-carboxyphenylamino)-1-deoxy-D-ribulose 5-phosphate + H(+) = (1S,2R)-1-C-(indol-3-yl)glycerol 3-phosphate + CO2 + H2O. It participates in amino-acid biosynthesis; L-tryptophan biosynthesis; L-tryptophan from chorismate: step 4/5. This Lacticaseibacillus paracasei (strain ATCC 334 / BCRC 17002 / CCUG 31169 / CIP 107868 / KCTC 3260 / NRRL B-441) (Lactobacillus paracasei) protein is Indole-3-glycerol phosphate synthase.